The sequence spans 416 residues: Adenylosuccinate synthetase (416 aa).

Residues 12–18 (GDEGKGK) and 40–42 (GHT) each bind GTP. Aspartate 13 functions as the Proton acceptor in the catalytic mechanism. Aspartate 13 and glycine 40 together coordinate Mg(2+). Residues 13-16 (DEGK), 38-41 (NAGH), threonine 125, arginine 139, glutamine 220, threonine 235, and arginine 299 each bind IMP. The active-site Proton donor is the histidine 41. Substrate is bound at residue 295–301 (TTTGRPR). Residues arginine 301, 327–329 (KLD), and 405–407 (STS) each bind GTP.

It belongs to the adenylosuccinate synthetase family. In terms of assembly, homodimer. Requires Mg(2+) as cofactor.

The protein localises to the cytoplasm. The catalysed reaction is IMP + L-aspartate + GTP = N(6)-(1,2-dicarboxyethyl)-AMP + GDP + phosphate + 2 H(+). Its pathway is purine metabolism; AMP biosynthesis via de novo pathway; AMP from IMP: step 1/2. Functionally, plays an important role in the de novo pathway of purine nucleotide biosynthesis. Catalyzes the first committed step in the biosynthesis of AMP from IMP. This is Adenylosuccinate synthetase from Nitratiruptor sp. (strain SB155-2).